Consider the following 339-residue polypeptide: F-box protein At3g22700 (339 aa).

The F-box domain occupies 1–49; the sequence is MMSNLPLDLVEEILSRVPATSLKRLRSTCRQWNALLKDRRFTEKHFRKA.

The sequence is that of F-box protein At3g22700 from Arabidopsis thaliana (Mouse-ear cress).